Reading from the N-terminus, the 554-residue chain is Phospho-2-dehydro-3-deoxyheptonate aldolase 1, chloroplastic (554 aa).

The transit peptide at 1–39 directs the protein to the chloroplast; sequence MSLATSSSMAGGAAVVPRSATATTASAFVTMKRRATAVR. The tract at residues 41–70 is disordered; it reads VHAAEPSKNPPVGVPSAAKTSSPSVAAPEK.

This sequence belongs to the class-II DAHP synthase family.

Its subcellular location is the plastid. The protein resides in the chloroplast. It carries out the reaction D-erythrose 4-phosphate + phosphoenolpyruvate + H2O = 7-phospho-2-dehydro-3-deoxy-D-arabino-heptonate + phosphate. The protein operates within metabolic intermediate biosynthesis; chorismate biosynthesis; chorismate from D-erythrose 4-phosphate and phosphoenolpyruvate: step 1/7. This Oryza sativa subsp. japonica (Rice) protein is Phospho-2-dehydro-3-deoxyheptonate aldolase 1, chloroplastic (DAHPS1).